Reading from the N-terminus, the 240-residue chain is Sugar fermentation stimulation protein homolog (240 aa).

Belongs to the SfsA family.

The chain is Sugar fermentation stimulation protein homolog from Saccharolobus islandicus (strain M.14.25 / Kamchatka #1) (Sulfolobus islandicus).